The sequence spans 444 residues: Phosphoribosylamine--glycine ligase (444 aa).

The region spanning 109–324 is the ATP-grasp domain; the sequence is RNLFKKYEID…FLDVCFAIAE (216 aa). 140-202 lines the ATP pocket; it reads MTSLGKDVVV…EEKLVGVEFT (63 aa). Gln-282, Glu-294, and Asn-296 together coordinate Mg(2+). The Mn(2+) site is built by Gln-282, Glu-294, and Asn-296.

The protein belongs to the GARS family. Requires Mg(2+) as cofactor. Mn(2+) is required as a cofactor.

The catalysed reaction is 5-phospho-beta-D-ribosylamine + glycine + ATP = N(1)-(5-phospho-beta-D-ribosyl)glycinamide + ADP + phosphate + H(+). The protein operates within purine metabolism; IMP biosynthesis via de novo pathway; N(1)-(5-phospho-D-ribosyl)glycinamide from 5-phospho-alpha-D-ribose 1-diphosphate: step 2/2. This Methanococcus maripaludis (strain C7 / ATCC BAA-1331) protein is Phosphoribosylamine--glycine ligase.